Consider the following 1384-residue polypeptide: ATP-dependent RNA helicase TDRD9 (1384 aa).

The interval 35–60 (EAPREEVQRSEEVPSEAPTAQAQDPV) is disordered. The segment covering 36–46 (APREEVQRSEE) has biased composition (basic and acidic residues). A Helicase ATP-binding domain is found at 144–310 (ISLIESNSVV…FAVPVQNKMN (167 aa)). An ATP-binding site is contributed by 157-164 (GATGSGKS). The DEAH box signature appears at 256–259 (DEVH). Residues 379 to 546 (SGAQFVSERS…VLKVKLLDMG (168 aa)) form the Helicase C-terminal domain. Residues 946 to 1006 (HPHPDLVCLA…REIPCQLLEL (61 aa)) enclose the Tudor domain.

The protein belongs to the DEAD box helicase family. DEAH subfamily. Interacts with piRNA-associated proteins PIWIL1 and PIWIL4.

The protein resides in the cytoplasm. The protein localises to the nucleus. The enzyme catalyses ATP + H2O = ADP + phosphate + H(+). ATP-binding RNA helicase which plays a central role during spermatogenesis by repressing transposable elements and preventing their mobilization, which is essential for the germline integrity. Acts via the piRNA metabolic process, which mediates the repression of transposable elements during meiosis by forming complexes composed of piRNAs and Piwi proteins and governs the methylation and subsequent repression of transposons. Acts downstream of piRNA biogenesis: exclusively required for transposon silencing in the nucleus, suggesting that it acts as a nuclear effector in the nucleus together with PIWIL4. The protein is ATP-dependent RNA helicase TDRD9 of Rattus norvegicus (Rat).